A 204-amino-acid polypeptide reads, in one-letter code: Somatotropin (204 aa).

The N-terminal stretch at 1 to 17 (MDRVLLLLSVLSLGVSS) is a signal peptide. Q18 bears the Pyrrolidone carboxylic acid mark. H36 is a binding site for Zn(2+). Cysteines 69 and 177 form a disulfide. Position 186 (E186) interacts with Zn(2+). C194 and C202 are joined by a disulfide.

It belongs to the somatotropin/prolactin family.

It localises to the secreted. Its function is as follows. Growth hormone plays an important role in growth control and is involved in the regulation of several anabolic processes. Implicated as an osmoregulatory substance important for seawater adaptation. The protein is Somatotropin (gh) of Sciaenops ocellatus (Red drum).